The following is a 63-amino-acid chain: Prokaryotic ubiquitin-like protein Pup (63 aa).

Positions 1 to 11 (MAQEQTRRGGG) are enriched in basic and acidic residues. Residues 1–36 (MAQEQTRRGGGGDDDEFTSSTSVGQERREKLTEETD) form a disordered region. The tract at residues 20–57 (STSVGQERREKLTEETDDLLDEIDDVLEENAEDFVRAY) is ARC ATPase binding. The stretch at 23-51 (VGQERREKLTEETDDLLDEIDDVLEENAE) forms a coiled coil. Gln-63 bears the Deamidated glutamine mark. Residue Gln-63 forms an Isoglutamyl lysine isopeptide (Gln-Lys) (interchain with K-? in acceptor proteins) linkage.

Belongs to the prokaryotic ubiquitin-like protein family. In terms of assembly, strongly interacts with the proteasome-associated ATPase ARC through a hydrophobic interface; the interacting region of Pup lies in its C-terminal half. There is one Pup binding site per ARC hexamer ring. In terms of processing, is modified by deamidation of its C-terminal glutamine to glutamate by the deamidase Dop, a prerequisite to the subsequent pupylation process.

Its pathway is protein degradation; proteasomal Pup-dependent pathway. Functionally, protein modifier that is covalently attached to lysine residues of substrate proteins, thereby targeting them for proteasomal degradation. The tagging system is termed pupylation. The polypeptide is Prokaryotic ubiquitin-like protein Pup (Mycobacterium leprae (strain Br4923)).